The primary structure comprises 399 residues: Nicotinate phosphoribosyltransferase (399 aa).

His-217 bears the Phosphohistidine; by autocatalysis mark.

It belongs to the NAPRTase family. Post-translationally, transiently phosphorylated on a His residue during the reaction cycle. Phosphorylation strongly increases the affinity for substrates and increases the rate of nicotinate D-ribonucleotide production. Dephosphorylation regenerates the low-affinity form of the enzyme, leading to product release.

The enzyme catalyses nicotinate + 5-phospho-alpha-D-ribose 1-diphosphate + ATP + H2O = nicotinate beta-D-ribonucleotide + ADP + phosphate + diphosphate. Its pathway is cofactor biosynthesis; NAD(+) biosynthesis; nicotinate D-ribonucleotide from nicotinate: step 1/1. In terms of biological role, catalyzes the synthesis of beta-nicotinate D-ribonucleotide from nicotinate and 5-phospho-D-ribose 1-phosphate at the expense of ATP. The sequence is that of Nicotinate phosphoribosyltransferase from Burkholderia mallei (strain ATCC 23344).